The primary structure comprises 203 residues: V-type ATP synthase subunit D (203 aa).

The protein belongs to the V-ATPase D subunit family.

In terms of biological role, produces ATP from ADP in the presence of a proton gradient across the membrane. This chain is V-type ATP synthase subunit D, found in Chlamydia trachomatis serovar L2 (strain ATCC VR-902B / DSM 19102 / 434/Bu).